The following is a 211-amino-acid chain: Outer-membrane lipoprotein carrier protein (211 aa).

A signal peptide spans 1–25 (MRAIRMLLVSALTLGSLSATLSAHA).

The protein belongs to the LolA family. In terms of assembly, monomer.

The protein localises to the periplasm. Its function is as follows. Participates in the translocation of lipoproteins from the inner membrane to the outer membrane. Only forms a complex with a lipoprotein if the residue after the N-terminal Cys is not an aspartate (The Asp acts as a targeting signal to indicate that the lipoprotein should stay in the inner membrane). This is Outer-membrane lipoprotein carrier protein from Pseudomonas putida (strain W619).